The sequence spans 742 residues: Two pore calcium channel protein 1 (742 aa).

The segment at 1-44 is disordered; it reads MSEAQAPLITEEAAERGLASSGSRRLSDGGGGQGSRKYRRRSDA. The Cytoplasmic segment spans residues 1–82; that stretch reads MSEAQAPLIT…NDTRFGRAMS (82 aa). The helical transmembrane segment at 83–103 threads the bilayer; it reads FYFVYLRLDWLWSLNIFALIL. At 104-140 the chain is on the extracellular side; the sequence is LNFLEKPLWCRKDALHACDQRDMYFLGQLPYFSKTES. The chain crosses the membrane as a helical span at residues 141 to 161; it reads LIYEGLTLVILVMEILCPLSY. Residues 162 to 176 lie on the Cytoplasmic side of the membrane; sequence EGLNIFWRSTTNKLK. A helical membrane pass occupies residues 177-197; it reads ILLLFILACDILVFAFSSQPF. Residues 198–204 are Extracellular-facing; the sequence is RLAPYIR. The chain crosses the membrane as a helical; Voltage-sensor span at residues 205-226; that stretch reads VVFLIMTIRELRMCAITLAGLI. A helical membrane pass occupies residues 227–247; sequence GTYLNVLALSLLFLLFASWLA. Residues 248–258 are Extracellular-facing; the sequence is YVTFEDTPQGK. Positions 259–273 form an intramembrane region, pore-forming; it reads TIFSSYGVTLYQMFV. The Extracellular segment spans residues 274–296; the sequence is LFTTSNNPDVWVPAYKISRWYSL. A helical transmembrane segment spans residues 297-317; sequence FFIVYVLLGVYFLTNLILAVI. Over 318-446 the chain is Cytoplasmic; sequence YDSFKEQFAK…SFVRSRTFEY (129 aa). EF-hand domains lie at 335 to 370 and 376 to 411; these read IRKN…LNKY and TSRE…IAIK. Residues 447–467 traverse the membrane as a helical segment; that stretch reads IIVFVLLINLVAVIIETTLDI. The Extracellular segment spans residues 468–480; the sequence is ENSSSQETWQEVE. Residue Asn-469 is glycosylated (N-linked (GlcNAc...) asparagine). The chain crosses the membrane as a helical span at residues 481-501; the sequence is FFLGWIYVAEMALKIFSLGFG. Residues 502-510 lie on the Cytoplasmic side of the membrane; it reads AYWMEGQNK. The helical transmembrane segment at 511–531 threads the bilayer; the sequence is FDFVLTWTIFIGETLTFAFPS. Residues 532 to 540 are Extracellular-facing; the sequence is KLPFLSNGE. Residues 541-558 traverse the membrane as a helical; Voltage-sensor segment; sequence WIRYLLLGRVLRLTRILL. Over 559 to 582 the chain is Cytoplasmic; that stretch reads QVQRFRVFVATFFTLMSSLMPYLG. The helical transmembrane segment at 583–603 threads the bilayer; it reads IVFCILCMYCSLGLQIFGGIV. The Extracellular segment spans residues 604-627; that stretch reads YAGNPTLEETDLFSNDYLLFNFND. An intramembrane region (pore-forming) is located at residues 628 to 642; that stretch reads YPSGMVTLFNLLVMG. At 643–663 the chain is on the extracellular side; it reads NWQVWMESYWQLTGSSWSLIY. The chain crosses the membrane as a helical span at residues 664–684; it reads FVSFYLISILLLLNLIVAFVL. The Cytoplasmic portion of the chain corresponds to 685 to 742; that stretch reads EAFFAEMELEKGEEVDIQSPTSGGIKKRRSMRVRSKGTMVDILLHHMLSNELDGSQNS.

Belongs to the calcium channel alpha-1 subunit (TC 1.A.1.11) family. Two pore calcium channel subfamily. Homodimer.

Its subcellular location is the membrane. With respect to regulation, inhibited by Al(3+). Functions as a voltage-gated inward-rectifying Ca(2+) channel (VDCC) across the plasma membrane that mediates sucrose-induced Ca(2+) influx in autotrophically grown leaf cells. Acts as the major ROS-responsive Ca(2+) channel and is the possible target of Al-dependent inhibition. Plays a regulatory role in defense responses. The polypeptide is Two pore calcium channel protein 1 (TPC1) (Hordeum vulgare (Barley)).